Consider the following 506-residue polypeptide: GTPase Der (506 aa).

2 EngA-type G domains span residues 3 to 166 (PVVA…GEQL) and 218 to 391 (IKIA…ACAT). Residues 9–16 (GRPNVGKS), 56–60 (DTGGI), 118–121 (NKTD), 224–231 (GRPNVGKS), 271–275 (DTAGV), and 336–339 (NKWD) each bind GTP. The region spanning 392–476 (QKTSTSMLTR…PIRIQFQEGN (85 aa)) is the KH-like domain.

The protein belongs to the TRAFAC class TrmE-Era-EngA-EngB-Septin-like GTPase superfamily. EngA (Der) GTPase family. Associates with the 50S ribosomal subunit.

In terms of biological role, GTPase that plays an essential role in the late steps of ribosome biogenesis. This Actinobacillus pleuropneumoniae serotype 3 (strain JL03) protein is GTPase Der.